A 266-amino-acid polypeptide reads, in one-letter code: Outer membrane protein OmpK (266 aa).

The N-terminal stretch at 1 to 20 (MRKSLLALSLLAATSAPVLA) is a signal peptide.

Belongs to the nucleoside-specific channel-forming outer membrane porin (Tsx) (TC 1.B.10) family.

It localises to the cell outer membrane. In terms of biological role, serves as receptor for a broad-host-range vibriophage, KVP40. This is Outer membrane protein OmpK (ompK) from Vibrio parahaemolyticus serotype O3:K6 (strain RIMD 2210633).